The primary structure comprises 697 residues: Portal protein (697 aa).

Positions methionine 633–histidine 697 are disordered. Over residues isoleucine 664–arginine 689 the composition is skewed to basic and acidic residues.

The protein belongs to the herpesviridae portal protein family. Homododecamerizes. Interacts with terminase subunits TRM1 and TRM3.

It localises to the virion. It is found in the host nucleus. In terms of biological role, forms a portal in the viral capsid through which viral DNA is translocated during DNA packaging. Assembles as a dodecamer at a single fivefold axe of the T=16 icosahedric capsid. Binds to the molecular motor that translocates the viral DNA, termed terminase. This Homo sapiens (Human) protein is Portal protein (UL104).